A 349-amino-acid chain; its full sequence is Isopentenyl-diphosphate delta-isomerase (349 aa).

Substrate is bound at residue 6–7 (RK). FMN is bound by residues 62-64 (AMT), Ser-93, and Asn-122. Position 152 (Gln-152) interacts with substrate. Position 153 (Glu-153) interacts with Mg(2+). Residues Lys-184, Thr-214, 258-259 (GG), and 280-281 (AG) each bind FMN.

This sequence belongs to the IPP isomerase type 2 family. As to quaternary structure, homooctamer. Dimer of tetramers. FMN serves as cofactor. It depends on NADPH as a cofactor. Requires Mg(2+) as cofactor.

The protein localises to the cytoplasm. The catalysed reaction is isopentenyl diphosphate = dimethylallyl diphosphate. Its function is as follows. Involved in the biosynthesis of isoprenoids. Catalyzes the 1,3-allylic rearrangement of the homoallylic substrate isopentenyl (IPP) to its allylic isomer, dimethylallyl diphosphate (DMAPP). This is Isopentenyl-diphosphate delta-isomerase from Bacillus cereus (strain ATCC 14579 / DSM 31 / CCUG 7414 / JCM 2152 / NBRC 15305 / NCIMB 9373 / NCTC 2599 / NRRL B-3711).